An 83-amino-acid chain; its full sequence is MGGLSLPHLIVLALVVLILFGRGRISEMMGDFGKGIKSFKQGMNDEDSKPVTPPPAQIPPASLQQTPPPAQPAPQPTSTDQAQ.

A helical membrane pass occupies residues M1–G21. The segment at K34–Q83 is disordered. Positions T66–Q75 are enriched in pro residues.

Belongs to the TatA/E family. In terms of assembly, the Tat system comprises two distinct complexes: a TatABC complex, containing multiple copies of TatA, TatB and TatC subunits, and a separate TatA complex, containing only TatA subunits. Substrates initially bind to the TatABC complex, which probably triggers association of the separate TatA complex to form the active translocon.

The protein localises to the cell inner membrane. Functionally, part of the twin-arginine translocation (Tat) system that transports large folded proteins containing a characteristic twin-arginine motif in their signal peptide across membranes. TatA could form the protein-conducting channel of the Tat system. The protein is Sec-independent protein translocase protein TatA of Novosphingobium aromaticivorans (strain ATCC 700278 / DSM 12444 / CCUG 56034 / CIP 105152 / NBRC 16084 / F199).